A 61-amino-acid polypeptide reads, in one-letter code: Sec-independent protein translocase protein TatA (61 aa).

The chain crosses the membrane as a helical span at residues 2–22; sequence GLSGISPLSLLLILAIIVALF.

Belongs to the TatA/E family. The Tat system comprises two distinct complexes: a TatABC complex, containing multiple copies of TatA, TatB and TatC subunits, and a separate TatA complex, containing only TatA subunits. Substrates initially bind to the TatABC complex, which probably triggers association of the separate TatA complex to form the active translocon.

The protein localises to the cell inner membrane. Functionally, part of the twin-arginine translocation (Tat) system that transports large folded proteins containing a characteristic twin-arginine motif in their signal peptide across membranes. TatA could form the protein-conducting channel of the Tat system. The protein is Sec-independent protein translocase protein TatA of Legionella pneumophila (strain Paris).